Consider the following 235-residue polypeptide: ATP synthase subunit a (235 aa).

The next 5 membrane-spanning stretches (helical) occupy residues 17 to 37, 76 to 96, 113 to 133, 179 to 201, and 211 to 230; these read TTNIVSGLIIYAIVFFTLYGM, SFFAFVLFVFIFFANQFGLIF, PVVTLTLSLMVMVLAFAAGVA, LLMSLIANMAFSHGILTIIPGLF, and VFIGSIQAYVFVTLTTVYIS.

It belongs to the ATPase A chain family. F-type ATPases have 2 components, CF(1) - the catalytic core - and CF(0) - the membrane proton channel. CF(1) has five subunits: alpha(3), beta(3), gamma(1), delta(1), epsilon(1). CF(0) has three main subunits: a(1), b(2) and c(9-12). The alpha and beta chains form an alternating ring which encloses part of the gamma chain. CF(1) is attached to CF(0) by a central stalk formed by the gamma and epsilon chains, while a peripheral stalk is formed by the delta and b chains.

Its subcellular location is the cell membrane. Functionally, key component of the proton channel; it plays a direct role in the translocation of protons across the membrane. The sequence is that of ATP synthase subunit a from Limosilactobacillus reuteri subsp. reuteri (strain JCM 1112) (Lactobacillus reuteri).